The sequence spans 214 residues: Chalcone isomerase-like protein 1 (214 aa).

The protein belongs to the chalcone isomerase family. Mostly expressed in glandular trichomes (lupulin glands), and, to a lower extent, in cones, cones bracts, leaves, stems and roots.

The protein localises to the cytoplasm. The catalysed reaction is a chalcone = a flavanone.. It functions in the pathway secondary metabolite biosynthesis; flavonoid biosynthesis. Involved in the biosynthesis of prenylated phenolics natural products which contribute to the bitter taste of beer and display broad biological activities. Involved in anthocyanin biosynthesis. Polyketide binding proteins (PBP) which reduces the catalytic activities of CHS_H1 and PT1L and prevents demethylxanthohumol (DMX) production, by binding to DMX and naringenin chalcone (NC) to stabilize the chalconoids ring-opened structure. The protein is Chalcone isomerase-like protein 1 of Humulus lupulus (European hop).